Here is a 288-residue protein sequence, read N- to C-terminus: N-acetylneuraminate lyase (288 aa).

Positions 44 and 45 each coordinate aceneuramate. Catalysis depends on Tyr133, which acts as the Proton donor. The Schiff-base intermediate with substrate role is filled by Lys161. 5 residues coordinate aceneuramate: Thr163, Gly185, Asp187, Glu188, and Ser204.

Belongs to the DapA family. NanA subfamily. As to quaternary structure, homotetramer.

The protein localises to the cytoplasm. The enzyme catalyses aceneuramate = aldehydo-N-acetyl-D-mannosamine + pyruvate. The protein operates within amino-sugar metabolism; N-acetylneuraminate degradation; D-fructose 6-phosphate from N-acetylneuraminate: step 1/5. Catalyzes the reversible aldol cleavage of N-acetylneuraminic acid (sialic acid; Neu5Ac) to form pyruvate and N-acetylmannosamine (ManNAc) via a Schiff base intermediate. This Clostridium perfringens (strain ATCC 13124 / DSM 756 / JCM 1290 / NCIMB 6125 / NCTC 8237 / Type A) protein is N-acetylneuraminate lyase.